The chain runs to 538 residues: Putative cysteine ligase BshC (538 aa).

A coiled-coil region spans residues 454-482; the sequence is LEKNAGFIQDQLQFLEKTVIRRIEEKENY.

It belongs to the BshC family.

Functionally, involved in bacillithiol (BSH) biosynthesis. May catalyze the last step of the pathway, the addition of cysteine to glucosamine malate (GlcN-Mal) to generate BSH. This is Putative cysteine ligase BshC from Bacillus licheniformis (strain ATCC 14580 / DSM 13 / JCM 2505 / CCUG 7422 / NBRC 12200 / NCIMB 9375 / NCTC 10341 / NRRL NRS-1264 / Gibson 46).